The primary structure comprises 359 residues: UPF0283 membrane protein RHE_CH02332 (359 aa).

The segment at 1 to 61 (MSKPPSDLPR…EDPFINPDRD (61 aa)) is disordered. 2 consecutive transmembrane segments (helical) span residues 77–97 (FGKIALAAFGILLSLGIGLWT) and 111–131 (LGYAALGVLAIGILAVLALVI).

The protein belongs to the UPF0283 family.

The protein resides in the cell inner membrane. The chain is UPF0283 membrane protein RHE_CH02332 from Rhizobium etli (strain ATCC 51251 / DSM 11541 / JCM 21823 / NBRC 15573 / CFN 42).